The following is a 392-amino-acid chain: Formate-dependent phosphoribosylglycinamide formyltransferase (392 aa).

N(1)-(5-phospho-beta-D-ribosyl)glycinamide-binding positions include 15–16 (EL) and glutamate 75. ATP is bound by residues arginine 107, lysine 148, 153-158 (SSGKGQ), 188-191 (EEFL), and glutamate 196. In terms of domain architecture, ATP-grasp spans 112–302 (DLASGELGLH…EFELHLRAVL (191 aa)). Mg(2+) contacts are provided by glutamate 261 and glutamate 273. Residues aspartate 280, lysine 350, and 357–358 (RR) each bind N(1)-(5-phospho-beta-D-ribosyl)glycinamide.

Belongs to the PurK/PurT family. Homodimer.

It carries out the reaction N(1)-(5-phospho-beta-D-ribosyl)glycinamide + formate + ATP = N(2)-formyl-N(1)-(5-phospho-beta-D-ribosyl)glycinamide + ADP + phosphate + H(+). Its pathway is purine metabolism; IMP biosynthesis via de novo pathway; N(2)-formyl-N(1)-(5-phospho-D-ribosyl)glycinamide from N(1)-(5-phospho-D-ribosyl)glycinamide (formate route): step 1/1. Functionally, involved in the de novo purine biosynthesis. Catalyzes the transfer of formate to 5-phospho-ribosyl-glycinamide (GAR), producing 5-phospho-ribosyl-N-formylglycinamide (FGAR). Formate is provided by PurU via hydrolysis of 10-formyl-tetrahydrofolate. In Synechococcus sp. (strain CC9902), this protein is Formate-dependent phosphoribosylglycinamide formyltransferase.